Consider the following 612-residue polypeptide: Dihydroxy-acid dehydratase (612 aa).

A Mg(2+)-binding site is contributed by D81. C122 provides a ligand contact to [2Fe-2S] cluster. The Mg(2+) site is built by D123 and K124. An N6-carboxylysine modification is found at K124. C193 is a [2Fe-2S] cluster binding site. Position 489 (E489) interacts with Mg(2+). The active-site Proton acceptor is the S515.

The protein belongs to the IlvD/Edd family. In terms of assembly, homodimer. The cofactor is [2Fe-2S] cluster. Requires Mg(2+) as cofactor.

It catalyses the reaction (2R)-2,3-dihydroxy-3-methylbutanoate = 3-methyl-2-oxobutanoate + H2O. It carries out the reaction (2R,3R)-2,3-dihydroxy-3-methylpentanoate = (S)-3-methyl-2-oxopentanoate + H2O. It functions in the pathway amino-acid biosynthesis; L-isoleucine biosynthesis; L-isoleucine from 2-oxobutanoate: step 3/4. Its pathway is amino-acid biosynthesis; L-valine biosynthesis; L-valine from pyruvate: step 3/4. Functions in the biosynthesis of branched-chain amino acids. Catalyzes the dehydration of (2R,3R)-2,3-dihydroxy-3-methylpentanoate (2,3-dihydroxy-3-methylvalerate) into 2-oxo-3-methylpentanoate (2-oxo-3-methylvalerate) and of (2R)-2,3-dihydroxy-3-methylbutanoate (2,3-dihydroxyisovalerate) into 2-oxo-3-methylbutanoate (2-oxoisovalerate), the penultimate precursor to L-isoleucine and L-valine, respectively. The polypeptide is Dihydroxy-acid dehydratase (Xanthomonas oryzae pv. oryzae (strain MAFF 311018)).